The chain runs to 122 residues: uncharacterized protein (122 aa).

The Cytoplasmic portion of the chain corresponds to 1–24 (MKNRKFSNLLLLRLRILCFNKKPA). The helical transmembrane segment at 25–45 (FAATSYAFFFRNFSVLIFIMV) threads the bilayer. The Extracellular segment spans residues 46-57 (PDEKENGAAADN). Residues 58 to 78 (SFSLLIGRGVVLFLFYCPTAL) traverse the membrane as a helical segment. Over 79-122 (KMHGPVPAHWFCDKNIEAIQSDGQIRLLRSGPFPWSHGTCIRGA) the chain is Cytoplasmic.

The protein localises to the membrane. This is an uncharacterized protein from Saccharomyces cerevisiae (strain ATCC 204508 / S288c) (Baker's yeast).